Here is a 781-residue protein sequence, read N- to C-terminus: Arf-GAP with coiled-coil, ANK repeat and PH domain-containing protein 2 (781 aa).

Residues 1–226 enclose the BAR domain; it reads MKVTVDFEEC…MKDLGAQLDQ (226 aa). Positions 266-361 constitute a PH domain; the sequence is GIVMEGYLFK…WIKAVQTSIA (96 aa). Basic and acidic residues predominate over residues 365–378; that stretch reads REKGDESEKQEKKS. Residues 365 to 390 are disordered; that stretch reads REKGDESEKQEKKSSPSTGSLESGSE. The segment covering 379–388 has biased composition (low complexity); it reads SPSTGSLESG. One can recognise an Arf-GAP domain in the interval 399–521; it reads ESALQRVQCI…KFVEKQPAAA (123 aa). The segment at 414 to 437 adopts a C4-type zinc-finger fold; sequence CCDCGLADPRWASINLGITLCIEC. The interval 520-576 is disordered; sequence AAVSPLESRTKVLPQSQEEKRHSAPEKSFLAIEQGAASPRVRSSDSGIQQSVDDSRE. ANK repeat units follow at residues 642-671, 675-704, and 708-737; these read NKAT…NVNI, KGRG…NQHA, and DGKD…NEEM.

The protein resides in the endosome membrane. It localises to the cell membrane. Its activity is regulated as follows. GAP activity stimulated by phosphatidylinositol 4,5-bisphosphate (PIP2) and phosphatidic acid. GTPase-activating protein (GAP) for ADP ribosylation factor 6 (ARF6). The polypeptide is Arf-GAP with coiled-coil, ANK repeat and PH domain-containing protein 2 (ACAP2) (Gallus gallus (Chicken)).